The sequence spans 619 residues: Nuclear hormone receptor family member nhr-6 (619 aa).

Polar residues predominate over residues 1–18; the sequence is MEQLSIQTDELQDQFSNC. Disordered stretches follow at residues 1–29, 58–86, 103–134, and 196–232; these read MEQLSIQTDELQDQFSNCSPASVDSSYSS, MSKNSSCSSSFDYGEFGPSSSSRKGSKTT, QVNTVPKPTKTEVESIPEEFEQKPSSSSHRLP, and QHFPVSDSRRGSQGTTSSSNNTGGTPSPHSSSLPTSP. Over residues 19–29 the composition is skewed to low complexity; that stretch reads SPASVDSSYSS. Polar residues predominate over residues 125–134; that stretch reads KPSSSSHRLP. Low complexity predominate over residues 206 to 232; sequence GSQGTTSSSNNTGGTPSPHSSSLPTSP. A DNA-binding region (nuclear receptor) is located at residues 265-340; it reads DKMCAVCNDR…VGMVKEIVRH (76 aa). NR C4-type zinc fingers lie at residues 268 to 288 and 304 to 328; these read CAVCNDRAVCLHYGARTCEGC and CAGNKTCPIDKRYRSRCQYCRYQKC. Residues 345-365 are disordered; the sequence is GRRGRLSSKTKLARSEDQPSP. Basic residues predominate over residues 346–356; the sequence is RRGRLSSKTKL. The NR LBD domain occupies 365 to 600; that stretch reads PPLPLLALMG…STDAPPACGS (236 aa). The AF-2 stretch occupies residues 589–600; that stretch reads LRSTDAPPACGS.

It belongs to the nuclear hormone receptor family. NR4 subfamily. In hermaphrodites, expressed in the developing spermatheca and dorsal uterus. Expression includes the 8 cells of the dorsal somatic gonad primordium and the sujc cells that form the core of the spermatheca-uterine valve. Expressed in the precursor cells of the spermatheca-sheath lineages (SS cells) and in the precursors and descendents of the dorsal-uterine lineage (DU cells). In both hermaphroditic and male animals, expressed in a pair of head chemosensory neurons.

It is found in the nucleus. Its function is as follows. Transcriptional activator that induces gene expression by binding to the NGFI-B response element (NBRE) 5'-AAAGGTCA-3'. Required for proper morphogenesis of the spermatheca and the spermatheca-uterine valve formation. Promotes cell proliferation and differentiation of the spermatheca precursor cells during spermatheca development in larval stage L4. Might play a role in promoting G1/S phase progression in the spermatheca precursor cell lineage. Also required for the differentiation of the spermatheca-uterine junction core (sujc) cells which are generating the spermatheca-uterine valve. This chain is Nuclear hormone receptor family member nhr-6 (nhr-6), found in Caenorhabditis elegans.